Here is a 448-residue protein sequence, read N- to C-terminus: Glutamate--tRNA ligase (448 aa).

The short motif at 10-20 (PSPTGFLHIGN) is the 'HIGH' region element. Residues 214-218 (KLSKR) carry the 'KMSKS' region motif. An ATP-binding site is contributed by lysine 217.

The protein belongs to the class-I aminoacyl-tRNA synthetase family. Glutamate--tRNA ligase type 1 subfamily. In terms of assembly, monomer.

The protein resides in the cytoplasm. It catalyses the reaction tRNA(Glu) + L-glutamate + ATP = L-glutamyl-tRNA(Glu) + AMP + diphosphate. Catalyzes the attachment of glutamate to tRNA(Glu) in a two-step reaction: glutamate is first activated by ATP to form Glu-AMP and then transferred to the acceptor end of tRNA(Glu). This chain is Glutamate--tRNA ligase, found in Phytoplasma australiense.